Consider the following 341-residue polypeptide: tRNA N6-adenosine threonylcarbamoyltransferase (341 aa).

Positions 111 and 115 each coordinate Fe cation. Residues 134 to 138 (LVSGG), D167, G180, and N276 each bind substrate. D304 is a Fe cation binding site.

This sequence belongs to the KAE1 / TsaD family. It depends on Fe(2+) as a cofactor.

The protein resides in the cytoplasm. The catalysed reaction is L-threonylcarbamoyladenylate + adenosine(37) in tRNA = N(6)-L-threonylcarbamoyladenosine(37) in tRNA + AMP + H(+). Its function is as follows. Required for the formation of a threonylcarbamoyl group on adenosine at position 37 (t(6)A37) in tRNAs that read codons beginning with adenine. Is involved in the transfer of the threonylcarbamoyl moiety of threonylcarbamoyl-AMP (TC-AMP) to the N6 group of A37, together with TsaE and TsaB. TsaD likely plays a direct catalytic role in this reaction. This is tRNA N6-adenosine threonylcarbamoyltransferase from Stutzerimonas stutzeri (strain A1501) (Pseudomonas stutzeri).